Here is a 122-residue protein sequence, read N- to C-terminus: Small ribosomal subunit protein uS13 (122 aa).

Residues 95–122 (GLPVRGQRTKTNARTRKGPKKTIAGKKK) are disordered.

This sequence belongs to the universal ribosomal protein uS13 family. As to quaternary structure, part of the 30S ribosomal subunit. Forms a loose heterodimer with protein S19. Forms two bridges to the 50S subunit in the 70S ribosome.

Its function is as follows. Located at the top of the head of the 30S subunit, it contacts several helices of the 16S rRNA. In the 70S ribosome it contacts the 23S rRNA (bridge B1a) and protein L5 of the 50S subunit (bridge B1b), connecting the 2 subunits; these bridges are implicated in subunit movement. Contacts the tRNAs in the A and P-sites. The sequence is that of Small ribosomal subunit protein uS13 from Corynebacterium diphtheriae (strain ATCC 700971 / NCTC 13129 / Biotype gravis).